The following is a 222-amino-acid chain: DNA ADP-ribosyl transferase (222 aa).

Residues 12 to 209 enclose the DarT domain; the sequence is TLIYHITHLN…PVRVRRSWYY (198 aa). Residues 16–18, G25, and L33 contribute to the NAD(+) site; that span reads HIT. The NAD(+)-binding element stretch occupies residues 38–56; the sequence is RPPTQQNVAYGHIQAHRAQ. A DNA-binding region spans residues 47-53; the sequence is YGHIQAH. An NAD(+)-binding site is contributed by R54. R54 acts as the Proton acceptor in catalysis. DNA-binding regions lie at residues 78 to 83, 148 to 151, and 154 to 158; these read RSPMLY, SYWA, and REKKQ. The interval 119 to 160 is ADP-ribosylating turn-turn loop; sequence TDRHAAVQYVCFFHKLEHLKALDWQAIQASYWANVREKKQAE. E160 is an active-site residue.

The protein belongs to the DarT ADP-ribosyltransferase family. Interacts with cognate antitoxin DarG (via C-terminus); this heterodimeric complex neutralizes the toxic effect of DarT by preventing ssDNA binding to DarT and consequently inactivating the toxin by direct protein-protein interactions.

The enzyme catalyses a thymidine in DNA + NAD(+) = an N-(ADP-alpha-D-ribosyl)-thymidine in DNA + nicotinamide + H(+). Its function is as follows. Toxic component of the hybrid type II/IV toxin-antitoxin (TA) system DarTG, which plays a crucial role in controlling bacterial growth and bacteriophage infection. Its toxic effect is neutralized by cognate antitoxin DarG. In case of phage infection, DarT toxin ADP-ribosylates DNA, which inhibits both viral DNA and RNA synthesis and leads to abortive infection. ADP-ribosylates ssDNA on the second thymidine of the consensus sequence 5'-TNTC-3'; the protein does not auto-modify. Has no activity on dsDNA in vitro. This leads to a decrease in DNA replication. Upon expression in E.coli inhibits cell growth, colony formation and induces the SOS response. Expression leads to bacteriostasis; however if cells grow over an hour in the presence of toxin, growth is no longer restored on antitoxin-inducing plates. In E.coli ADP-ribosylates genomic DNA (gDNA), which induces RecA expression (a marker for DNA damage). In Thermus aquaticus (strain ATCC BAA-2747 / Y51MC23), this protein is DNA ADP-ribosyl transferase.